Consider the following 282-residue polypeptide: Light-independent protochlorophyllide reductase iron-sulfur ATP-binding protein (282 aa).

ATP contacts are provided by residues Gly-10–Thr-15 and Lys-39. Ser-14 is a binding site for Mg(2+). Residues Cys-95 and Cys-129 each coordinate [4Fe-4S] cluster. Asn-180–Arg-181 is an ATP binding site.

This sequence belongs to the NifH/BchL/ChlL family. Homodimer. Protochlorophyllide reductase is composed of three subunits; ChlL, ChlN and ChlB. The cofactor is [4Fe-4S] cluster.

The protein resides in the plastid. The protein localises to the cyanelle. It catalyses the reaction chlorophyllide a + oxidized 2[4Fe-4S]-[ferredoxin] + 2 ADP + 2 phosphate = protochlorophyllide a + reduced 2[4Fe-4S]-[ferredoxin] + 2 ATP + 2 H2O. The protein operates within porphyrin-containing compound metabolism; chlorophyll biosynthesis (light-independent). In terms of biological role, component of the dark-operative protochlorophyllide reductase (DPOR) that uses Mg-ATP and reduced ferredoxin to reduce ring D of protochlorophyllide (Pchlide) to form chlorophyllide a (Chlide). This reaction is light-independent. The L component serves as a unique electron donor to the NB-component of the complex, and binds Mg-ATP. In Cyanophora paradoxa, this protein is Light-independent protochlorophyllide reductase iron-sulfur ATP-binding protein.